Reading from the N-terminus, the 537-residue chain is CTP synthase (537 aa).

Residues 1 to 265 form an amidoligase domain region; the sequence is MVHFIFVTGG…DNKVLKFFNI (265 aa). Residue Ser13 participates in CTP binding. Residue Ser13 coordinates UTP. ATP contacts are provided by residues 14-19 and Asp71; that span reads SLGKGL. 2 residues coordinate Mg(2+): Asp71 and Glu139. CTP-binding positions include 146-148 and Lys222; that span reads DIE. Lys222 is a binding site for UTP. Positions 290–536 constitute a Glutamine amidotransferase type-1 domain; sequence RIAIIAKYHK…IKAAIEYNKC (247 aa). Position 352 (Gly352) interacts with L-glutamine. Cys379 (nucleophile; for glutamine hydrolysis) is an active-site residue. L-glutamine contacts are provided by residues 380-383, Glu403, and Arg464; that span reads FGMQ. Active-site residues include His509 and Glu511.

This sequence belongs to the CTP synthase family. Homotetramer.

The catalysed reaction is UTP + L-glutamine + ATP + H2O = CTP + L-glutamate + ADP + phosphate + 2 H(+). It carries out the reaction L-glutamine + H2O = L-glutamate + NH4(+). The enzyme catalyses UTP + NH4(+) + ATP = CTP + ADP + phosphate + 2 H(+). Its pathway is pyrimidine metabolism; CTP biosynthesis via de novo pathway; CTP from UDP: step 2/2. Its activity is regulated as follows. Allosterically activated by GTP, when glutamine is the substrate; GTP has no effect on the reaction when ammonia is the substrate. The allosteric effector GTP functions by stabilizing the protein conformation that binds the tetrahedral intermediate(s) formed during glutamine hydrolysis. Inhibited by the product CTP, via allosteric rather than competitive inhibition. In terms of biological role, catalyzes the ATP-dependent amination of UTP to CTP with either L-glutamine or ammonia as the source of nitrogen. Regulates intracellular CTP levels through interactions with the four ribonucleotide triphosphates. The polypeptide is CTP synthase (Rickettsia conorii (strain ATCC VR-613 / Malish 7)).